A 474-amino-acid chain; its full sequence is UDP-N-acetylmuramate--L-alanine ligase (474 aa).

An ATP-binding site is contributed by 123 to 129 (GTHGKTT).

The protein belongs to the MurCDEF family.

Its subcellular location is the cytoplasm. It catalyses the reaction UDP-N-acetyl-alpha-D-muramate + L-alanine + ATP = UDP-N-acetyl-alpha-D-muramoyl-L-alanine + ADP + phosphate + H(+). The protein operates within cell wall biogenesis; peptidoglycan biosynthesis. In terms of biological role, cell wall formation. The sequence is that of UDP-N-acetylmuramate--L-alanine ligase from Alcanivorax borkumensis (strain ATCC 700651 / DSM 11573 / NCIMB 13689 / SK2).